The sequence spans 305 residues: tRNA pseudouridine synthase B (305 aa).

Asp48 (nucleophile) is an active-site residue.

It belongs to the pseudouridine synthase TruB family. Type 1 subfamily.

It catalyses the reaction uridine(55) in tRNA = pseudouridine(55) in tRNA. Its function is as follows. Responsible for synthesis of pseudouridine from uracil-55 in the psi GC loop of transfer RNAs. This chain is tRNA pseudouridine synthase B, found in Stutzerimonas stutzeri (strain A1501) (Pseudomonas stutzeri).